Here is a 388-residue protein sequence, read N- to C-terminus: Protein phosphatase 2C 57 (388 aa).

In terms of domain architecture, PPM-type phosphatase spans Arg-59–Leu-348. Residues Asp-93, Gly-94, Asp-296, and Asp-339 each coordinate Mn(2+). A helical transmembrane segment spans residues Val-363–Met-383.

This sequence belongs to the PP2C family. Mg(2+) is required as a cofactor. Requires Mn(2+) as cofactor.

The protein localises to the membrane. It is found in the plastid. The protein resides in the chloroplast stroma. It catalyses the reaction O-phospho-L-seryl-[protein] + H2O = L-seryl-[protein] + phosphate. It carries out the reaction O-phospho-L-threonyl-[protein] + H2O = L-threonyl-[protein] + phosphate. Its function is as follows. Protein phosphatase specifically required for efficient dephosphorylation of the light-harvesting complex II outer antennae (LCHII) and transition from state 2 to state 1. State transition plays a central role in response to environmental changes and allows to adjust to changing light conditions via the redistribution of light excitation energy between photosystem II (PSII) and photosystem I (PSI) in a short time by relocating LHCII proteins. Mainly responsible for the dephosphorylation of Lhcb1 and Lhcb2 but not of the photosystem II core proteins. This Arabidopsis thaliana (Mouse-ear cress) protein is Protein phosphatase 2C 57.